Consider the following 1009-residue polypeptide: Membrane alanyl aminopeptidase (1009 aa).

A signal peptide spans 1–15 (MAAIKLLVLSLACAC). A propeptide spans 16–52 (VIAHSPIPPASRTIFLDERLEGGAFENIDAFENIELS) (activation peptide). 338 to 342 (GAMEN) serves as a coordination point for substrate. A Zn(2+)-binding site is contributed by His374. Glu375 acts as the Proton acceptor in catalysis. Zn(2+) is bound by residues His378 and Glu397. The N-linked (GlcNAc...) asparagine glycan is linked to Asn906. The disordered stretch occupies residues 955-980 (PSTSTTSTTAAPTTVTQPTITEPSTP). Asp987 is lipidated: GPI-anchor amidated aspartate. The propeptide at 988 to 1009 (SAMTSFASLFIISLGAILHLIL) is removed in mature form.

The protein belongs to the peptidase M1 family. It depends on Zn(2+) as a cofactor.

It localises to the cell membrane. Binds to the B.thuringiensis toxin, CryIA(C). In Heliothis virescens (Tobacco budworm moth), this protein is Membrane alanyl aminopeptidase.